The chain runs to 168 residues: Iron-sulfur cluster assembly enzyme ISCU (168 aa).

Residues Met-1 to Leu-35 constitute a mitochondrion transit peptide. A Phosphoserine modification is found at Ser-15. Cys-70 acts as the Cysteine persulfide intermediate in catalysis. Cys-70 carries the post-translational modification Cysteine persulfide. Zn(2+)-binding residues include Asp-72, Cys-96, and Cys-139. The Cysteine persulfide intermediate role is filled by Cys-139. The residue at position 139 (Cys-139) is a Cysteine persulfide.

It belongs to the NifU family. Homodimer; Tyr-36-mediated dimerization of two iron- and sulfide-containing ISCU subunit bind to the cysteine desulfurase complex. Component of the mitochondrial core iron-sulfur cluster (ISC) complex composed of NFS1, LYRM4, NDUFAB1, ISCU, FXN, and FDX2; this complex is a heterohexamer containing two copies of each monomer. Interacts (D-state) with NFS1 (homodimer form); each monomer interacts with the C-terminal regions of each NFS1 monomer. Interacts (monomer form) with FXN (via ferrous form); the interaction is possible when both are bound to the dimeric form of the cysteine desulfurase complex (NFS1:LYRM4) and enhances FXN interaction to the dimeric form of the cysteine desulfurase complex (NFS1:LYRM4). Interacts with GLRX5. Interacts (D-state) with HSPA9. Interacts (S-state) with HSCB; this interaction stimulates the ATPase activity of HSPA9. Component of a complex composed of FXN, NFS1, LYRM4 and ISCU. In terms of processing, cysteine persulfide is reduced by thiol-containing molecules such as glutathione and L-cysteine. Phosphorylation at Ser-15 is required for ISCU protein stabilization in the cytosol, whereas dephosphorylation of Ser-15, due to the inhibition of mTORC1 (mammalian target of rapamycin complex 1) complex, leads to degradation of the precursor form and ultimately to a decrease in the mitochondrial mature form.

It localises to the mitochondrion. Its function is as follows. Mitochondrial scaffold protein, of the core iron-sulfur cluster (ISC) assembly complex, that provides the structural architecture on which the [2Fe-2S] clusters are assembled. The core iron-sulfur cluster (ISC) assembly complex is involved in the de novo synthesis of a [2Fe-2S] cluster, the first step of the mitochondrial iron-sulfur protein biogenesis. This process is initiated by the cysteine desulfurase complex (NFS1:LYRM4:NDUFAB1) that produces persulfide which is delivered on the scaffold protein ISCU in a FXN-dependent manner. Then this complex is stabilized by FDX2 which provides reducing equivalents to accomplish the [2Fe-2S] cluster assembly. Finally, the [2Fe-2S] cluster is transferred from ISCU to chaperone proteins, including HSCB, HSPA9 and GLRX5. Exists as two slow interchanging conformational states, a structured (S) and disordered (D) form. May modulate NFS1 desulfurase activity in a zinc-dependent manner. Modulates the interaction between FXN and the cysteine desulfurase complex. The polypeptide is Iron-sulfur cluster assembly enzyme ISCU (Mus musculus (Mouse)).